Here is a 421-residue protein sequence, read N- to C-terminus: Testin (421 aa).

The PET domain occupies 92–199 (MILTNPVAAK…GDVKLPCEMD (108 aa)). Residues 133–164 (EKQPVAGSEGAQYRKKQLAKQLPAHDQDPSKC) are disordered. Over residues 155 to 164 (PAHDQDPSKC) the composition is skewed to basic and acidic residues. LIM zinc-binding domains lie at 234 to 297 (YSCY…CDSE), 299 to 359 (PRCA…NHAV), and 362 to 421 (QGCH…KMMS).

It belongs to the prickle / espinas / testin family. In terms of assembly, interacts via LIM domain 1 with ZYX. Interacts (via LIM domain 3) with ENAH and VASP. Interacts with ALKBH4, talin, actin, alpha-actinin, GRIP1 and PXN. Interacts (via LIM domain 2) with ACTL7A (via N-terminus). Heterodimer with ACTL7A; the heterodimer interacts with ENAH to form a heterotrimer.

The protein localises to the cytoplasm. Its subcellular location is the cell junction. The protein resides in the focal adhesion. Its function is as follows. Scaffold protein that may play a role in cell adhesion, cell spreading and in the reorganization of the actin cytoskeleton. Plays a role in the regulation of cell proliferation. May act as a tumor suppressor. This chain is Testin (TES), found in Saimiri boliviensis boliviensis (Bolivian squirrel monkey).